A 330-amino-acid polypeptide reads, in one-letter code: Aspartate--ammonia ligase (330 aa).

The protein belongs to the class-II aminoacyl-tRNA synthetase family. AsnA subfamily.

The protein localises to the cytoplasm. It catalyses the reaction L-aspartate + NH4(+) + ATP = L-asparagine + AMP + diphosphate + H(+). The protein operates within amino-acid biosynthesis; L-asparagine biosynthesis; L-asparagine from L-aspartate (ammonia route): step 1/1. This Streptococcus thermophilus (strain CNRZ 1066) protein is Aspartate--ammonia ligase.